A 280-amino-acid chain; its full sequence is Thymidylate synthase (280 aa).

R21 lines the dUMP pocket. H51 is a (6R)-5,10-methylene-5,6,7,8-tetrahydrofolate binding site. A dUMP-binding site is contributed by 142 to 143 (RR). The active-site Nucleophile is C162. Residues 182–185 (RSAD), N193, and 223–225 (HLY) contribute to the dUMP site. D185 serves as a coordination point for (6R)-5,10-methylene-5,6,7,8-tetrahydrofolate. A279 contributes to the (6R)-5,10-methylene-5,6,7,8-tetrahydrofolate binding site.

Belongs to the thymidylate synthase family. Bacterial-type ThyA subfamily. In terms of assembly, homodimer.

The protein localises to the cytoplasm. The enzyme catalyses dUMP + (6R)-5,10-methylene-5,6,7,8-tetrahydrofolate = 7,8-dihydrofolate + dTMP. It functions in the pathway pyrimidine metabolism; dTTP biosynthesis. Catalyzes the reductive methylation of 2'-deoxyuridine-5'-monophosphate (dUMP) to 2'-deoxythymidine-5'-monophosphate (dTMP) while utilizing 5,10-methylenetetrahydrofolate (mTHF) as the methyl donor and reductant in the reaction, yielding dihydrofolate (DHF) as a by-product. This enzymatic reaction provides an intracellular de novo source of dTMP, an essential precursor for DNA biosynthesis. The sequence is that of Thymidylate synthase from Acinetobacter baumannii (strain AB307-0294).